A 399-amino-acid polypeptide reads, in one-letter code: CCA-adding enzyme (399 aa).

Positions 28 and 31 each coordinate ATP. Gly28 and Arg31 together coordinate CTP. Asp41 and Asp43 together coordinate Mg(2+). ATP-binding residues include Arg112, Asp155, Arg158, Arg161, and Arg164. The CTP site is built by Arg112, Asp155, Arg158, Arg161, and Arg164.

Belongs to the tRNA nucleotidyltransferase/poly(A) polymerase family. Bacterial CCA-adding enzyme type 3 subfamily. Homodimer. The cofactor is Mg(2+).

It catalyses the reaction a tRNA precursor + 2 CTP + ATP = a tRNA with a 3' CCA end + 3 diphosphate. The catalysed reaction is a tRNA with a 3' CCA end + 2 CTP + ATP = a tRNA with a 3' CCACCA end + 3 diphosphate. Functionally, catalyzes the addition and repair of the essential 3'-terminal CCA sequence in tRNAs without using a nucleic acid template. Adds these three nucleotides in the order of C, C, and A to the tRNA nucleotide-73, using CTP and ATP as substrates and producing inorganic pyrophosphate. tRNA 3'-terminal CCA addition is required both for tRNA processing and repair. Also involved in tRNA surveillance by mediating tandem CCA addition to generate a CCACCA at the 3' terminus of unstable tRNAs. While stable tRNAs receive only 3'-terminal CCA, unstable tRNAs are marked with CCACCA and rapidly degraded. The chain is CCA-adding enzyme from Staphylococcus saprophyticus subsp. saprophyticus (strain ATCC 15305 / DSM 20229 / NCIMB 8711 / NCTC 7292 / S-41).